The primary structure comprises 229 residues: uncharacterized protein (229 aa).

7 helical membrane-spanning segments follow: residues 1–21 (MFGT…GGIF), 32–52 (ILMQ…ITQH), 58–78 (YPIL…IINL), 100–120 (TAVL…EAAL), 139–159 (IVLA…LFSW), 178–198 (LINE…LSIL), and 206–226 (LNLL…HAFG).

The protein resides in the cell membrane. This is an uncharacterized protein from Bacillus subtilis (strain 168).